Reading from the N-terminus, the 291-residue chain is Acetylglutamate kinase (291 aa).

Substrate-binding positions include Gly64–Gly65, Arg86, and Asn190.

This sequence belongs to the acetylglutamate kinase family. ArgB subfamily.

It localises to the cytoplasm. The catalysed reaction is N-acetyl-L-glutamate + ATP = N-acetyl-L-glutamyl 5-phosphate + ADP. It functions in the pathway amino-acid biosynthesis; L-arginine biosynthesis; N(2)-acetyl-L-ornithine from L-glutamate: step 2/4. Its function is as follows. Catalyzes the ATP-dependent phosphorylation of N-acetyl-L-glutamate. This chain is Acetylglutamate kinase, found in Leptospira borgpetersenii serovar Hardjo-bovis (strain L550).